Reading from the N-terminus, the 338-residue chain is Biotin synthase (338 aa).

Residues 50 to 277 (QAVQLSTLMS…KSYVRLSAGR (228 aa)) form the Radical SAM core domain. Residues cysteine 65, cysteine 69, and cysteine 72 each coordinate [4Fe-4S] cluster. [2Fe-2S] cluster is bound by residues cysteine 109, cysteine 140, cysteine 200, and arginine 272.

It belongs to the radical SAM superfamily. Biotin synthase family. As to quaternary structure, homodimer. [4Fe-4S] cluster serves as cofactor. The cofactor is [2Fe-2S] cluster.

The catalysed reaction is (4R,5S)-dethiobiotin + (sulfur carrier)-SH + 2 reduced [2Fe-2S]-[ferredoxin] + 2 S-adenosyl-L-methionine = (sulfur carrier)-H + biotin + 2 5'-deoxyadenosine + 2 L-methionine + 2 oxidized [2Fe-2S]-[ferredoxin]. It participates in cofactor biosynthesis; biotin biosynthesis; biotin from 7,8-diaminononanoate: step 2/2. Catalyzes the conversion of dethiobiotin (DTB) to biotin by the insertion of a sulfur atom into dethiobiotin via a radical-based mechanism. The chain is Biotin synthase from Actinobacillus succinogenes (strain ATCC 55618 / DSM 22257 / CCUG 43843 / 130Z).